Consider the following 830-residue polypeptide: G-type lectin S-receptor-like serine/threonine-protein kinase SD1-13 (830 aa).

A signal peptide spans 1–21 (MGCLLILLLTLICFSLRLCLA). In terms of domain architecture, Bulb-type lectin spans 22 to 145 (TDVITFSSEF…TNTGDEILWE (124 aa)). At 22-434 (TDVITFSSEF…SEFKKRTNRS (413 aa)) the chain is on the extracellular side. 3 N-linked (GlcNAc...) asparagine glycosylation sites follow: N40, N53, and N82. Residues 283 to 321 (PSTKCDTYATCGQFASCRFNPGSTPPCMCIRGFKPQSYA) enclose the EGF-like; atypical domain. Disulfide bonds link C287/C299 and C293/C309. Residues N327, N384, and N432 are each glycosylated (N-linked (GlcNAc...) asparagine). The 84-residue stretch at 340-423 (CESRDNNDGS…TGVVFYIRLA (84 aa)) folds into the PAN domain. 2 cysteine pairs are disulfide-bonded: C377/C398 and C381/C387. The helical transmembrane segment at 435 to 455 (IVITVTLLVGAFLFAGTVVLA) threads the bilayer. Topologically, residues 456–830 (LWKIAKHREK…NVSLTKITGR (375 aa)) are cytoplasmic. Residues 512 to 798 (FSITNKLGQG…NLPEPKQPAF (287 aa)) enclose the Protein kinase domain. ATP is bound by residues 518–526 (LGQGGFGAV) and K540. Residue T545 is modified to Phosphothreonine. Residues S546 and S561 each carry the phosphoserine modification. Residues 601–618 (VKQRLLDWKTRFNIIDGI) form a caM-binding region. D637 serves as the catalytic Proton acceptor. A phosphoserine mark is found at S641, S654, and S670. T671 bears the Phosphothreonine mark. S714, S715, S726, S805, S809, S810, S813, S818, and S823 each carry phosphoserine. The segment at 789 to 830 (NLPEPKQPAFIPRRGTSEVESSGQSDPRASINNVSLTKITGR) is disordered. A compositionally biased stretch (polar residues) spans 806 to 830 (EVESSGQSDPRASINNVSLTKITGR). A phosphothreonine mark is found at T825 and T828.

Belongs to the protein kinase superfamily. Ser/Thr protein kinase family. In terms of assembly, interacts with PUB9, PUB13 and PUB14. Binds to calmodulin (CaM) in a Ca(2+)-dependent manner. Autophosphorylated. Mostly expressed in rosette leaves, and, to a lower extent, in cauline leaves and stems.

The protein resides in the cell membrane. The enzyme catalyses L-seryl-[protein] + ATP = O-phospho-L-seryl-[protein] + ADP + H(+). The catalysed reaction is L-threonyl-[protein] + ATP = O-phospho-L-threonyl-[protein] + ADP + H(+). Receptor-like serine/threonine-protein kinase that represses the disease resistance signaling pathway triggered in response to bacterial pathogen such as Pseudomonas syringae pv. tomato. This Arabidopsis thaliana (Mouse-ear cress) protein is G-type lectin S-receptor-like serine/threonine-protein kinase SD1-13 (SD113).